Here is a 160-residue protein sequence, read N- to C-terminus: 6-hydroxypseudooxynicotine dehydrogenase complex subunit beta (160 aa).

Positions 4–80 (FRLTVEVNGV…NSRIETVESL (77 aa)) constitute a 2Fe-2S ferredoxin-type domain. [2Fe-2S] cluster contacts are provided by Cys42, Cys47, Cys50, Cys62, Cys101, Cys104, Cys137, and Cys139.

Heterohexamer of 2 alpha (kdhA), 2 beta (kdhB) and 2 gamma (kdhC) subunit. Dimer of heterotrimers. The cofactor is [2Fe-2S] cluster.

It catalyses the reaction 6-hydroxypseudooxynicotine + A + H2O = 2,6-dihydroxypseudooxynicotine + AH2. It functions in the pathway alkaloid degradation; nicotine degradation. In terms of biological role, molybdo-flavoprotein enzyme complex involved in nicotine degradation. The subunit gamma (large subunit) contains the substrate-binding sites, the subunit alpha (medium subunit) binds FAD and the subunit beta (small subunit) has a 2Fe-2S ferredoxin-type domain which binds 2 2Fe-2S clusters. This Paenarthrobacter nicotinovorans (Arthrobacter nicotinovorans) protein is 6-hydroxypseudooxynicotine dehydrogenase complex subunit beta (kdhB).